The primary structure comprises 104 residues: UPF0235 protein MTH_637 (104 aa).

The protein belongs to the UPF0235 family.

This chain is UPF0235 protein MTH_637, found in Methanothermobacter thermautotrophicus (strain ATCC 29096 / DSM 1053 / JCM 10044 / NBRC 100330 / Delta H) (Methanobacterium thermoautotrophicum).